The sequence spans 158 residues: 6,7-dimethyl-8-ribityllumazine synthase (158 aa).

5-amino-6-(D-ribitylamino)uracil is bound by residues phenylalanine 22, 57–59 (AVE), and 81–83 (AVI). 86–87 (GT) provides a ligand contact to (2S)-2-hydroxy-3-oxobutyl phosphate. The active-site Proton donor is the histidine 89. Position 114 (phenylalanine 114) interacts with 5-amino-6-(D-ribitylamino)uracil. (2S)-2-hydroxy-3-oxobutyl phosphate is bound at residue arginine 128.

This sequence belongs to the DMRL synthase family. In terms of assembly, forms an icosahedral capsid composed of 60 subunits, arranged as a dodecamer of pentamers.

It catalyses the reaction (2S)-2-hydroxy-3-oxobutyl phosphate + 5-amino-6-(D-ribitylamino)uracil = 6,7-dimethyl-8-(1-D-ribityl)lumazine + phosphate + 2 H2O + H(+). The protein operates within cofactor biosynthesis; riboflavin biosynthesis; riboflavin from 2-hydroxy-3-oxobutyl phosphate and 5-amino-6-(D-ribitylamino)uracil: step 1/2. Its function is as follows. Catalyzes the formation of 6,7-dimethyl-8-ribityllumazine by condensation of 5-amino-6-(D-ribitylamino)uracil with 3,4-dihydroxy-2-butanone 4-phosphate. This is the penultimate step in the biosynthesis of riboflavin. This is 6,7-dimethyl-8-ribityllumazine synthase from Shewanella oneidensis (strain ATCC 700550 / JCM 31522 / CIP 106686 / LMG 19005 / NCIMB 14063 / MR-1).